We begin with the raw amino-acid sequence, 361 residues long: MAQNSLRLVEDKSVDKSKALEAALSQIERSFGKGSIMKLGSKDSVIEIETVSTGSLGLDIALGIGGLPKGRIIEIYGPESSGKTTLALQTIAEAQKKGGICGFVDAEHALDPVYARKLGVDLENLLISQPDTGEQALEITDTLVRSGAIDVLVVDSVAALVPRAEIEGEMGDSLPGMQARLMSQALRKLTASISKSNCMVIFINQIRMKIGVMFGSPETTTGGNALKFYASVRLDIRRIGSVKEREEVVGNQTRVKVVKNKMAPPFKQVEFDIMYGEGVSKTGELIDLGVKAGIVEKSGAWFSYNSQRLGQGRENAKLFLRDNPDLLREIEMALRQNAGLIADKFLENGGPESEGDEAADM.

77–84 serves as a coordination point for ATP; the sequence is GPESSGKT.

The protein belongs to the RecA family.

It localises to the cytoplasm. In terms of biological role, can catalyze the hydrolysis of ATP in the presence of single-stranded DNA, the ATP-dependent uptake of single-stranded DNA by duplex DNA, and the ATP-dependent hybridization of homologous single-stranded DNAs. It interacts with LexA causing its activation and leading to its autocatalytic cleavage. The sequence is that of Protein RecA from Sinorhizobium fredii (strain NBRC 101917 / NGR234).